The chain runs to 86 residues: Putative antitoxin VapB36 (86 aa).

Possibly the antitoxin component of a type II toxin-antitoxin (TA) system. Its cognate toxin is VapC36 (Potential). The chain is Putative antitoxin VapB36 (vapB36) from Mycobacterium tuberculosis (strain CDC 1551 / Oshkosh).